A 196-amino-acid chain; its full sequence is Large ribosomal subunit protein uL10 (196 aa).

The segment at 167–196 is disordered; sequence EKKAAEGPAEAPQPATEPPAEAPEAPADAE.

The protein belongs to the universal ribosomal protein uL10 family. Part of the ribosomal stalk of the 50S ribosomal subunit. The N-terminus interacts with L11 and the large rRNA to form the base of the stalk. The C-terminus forms an elongated spine to which L12 dimers bind in a sequential fashion forming a multimeric L10(L12)X complex.

Forms part of the ribosomal stalk, playing a central role in the interaction of the ribosome with GTP-bound translation factors. This Mycolicibacterium paratuberculosis (strain ATCC BAA-968 / K-10) (Mycobacterium paratuberculosis) protein is Large ribosomal subunit protein uL10.